The sequence spans 350 residues: Protein-glutamate methylesterase/protein-glutamine glutaminase 2 (350 aa).

Residues 3–121 form the Response regulatory domain; the sequence is RVLLVDDSPV…DPDYEEAVSE (119 aa). Asp54 bears the 4-aspartylphosphate mark. Residues 158-322 enclose the CheB-type methylesterase domain; the sequence is IHQDIRVIVI…SFVYGMPGAA (165 aa). Active-site residues include Ser170, His197, and Asp290.

The protein belongs to the CheB family. In terms of processing, phosphorylated by CheA. Phosphorylation of the N-terminal regulatory domain activates the methylesterase activity.

It is found in the cytoplasm. The catalysed reaction is [protein]-L-glutamate 5-O-methyl ester + H2O = L-glutamyl-[protein] + methanol + H(+). It catalyses the reaction L-glutaminyl-[protein] + H2O = L-glutamyl-[protein] + NH4(+). Functionally, involved in chemotaxis. Part of a chemotaxis signal transduction system that modulates chemotaxis in response to various stimuli. Catalyzes the demethylation of specific methylglutamate residues introduced into the chemoreceptors (methyl-accepting chemotaxis proteins or MCP) by CheR. Also mediates the irreversible deamidation of specific glutamine residues to glutamic acid. This is Protein-glutamate methylesterase/protein-glutamine glutaminase 2 from Methanospirillum hungatei JF-1 (strain ATCC 27890 / DSM 864 / NBRC 100397 / JF-1).